We begin with the raw amino-acid sequence, 607 residues long: TOM1-like protein 8 (607 aa).

The VHS domain maps to 9 to 138; it reads ATSDMLIGPD…ELLRAGIVFP (130 aa). Residues 141-175 are disordered; that stretch reads PQITPSSGQNGPSTRYPQNSRNARQEAIDTSTESE. A GAT domain is found at 175 to 263; that stretch reads EFPTLSLTEI…LLAKHEAIAS (89 aa). The residue at position 297 (serine 297) is a Phosphoserine. Positions 355–379 are enriched in polar residues; the sequence is NNCESSTPTSNPHANHQKVQQNYSN. 3 disordered regions span residues 355–393, 407–460, and 555–582; these read NNCESSTPTSNPHANHQKVQQNYSNGFGPGHQEQSYYGQ, QPSS…SPTH, and DNGNNNTNPYQVSSHQPPPMMKPMNKKP. Phosphoserine is present on serine 410. A compositionally biased stretch (low complexity) spans 448 to 460; that stretch reads QSPSSSPQYSPTH. Positions 555-569 are enriched in polar residues; sequence DNGNNNTNPYQVSSH.

This sequence belongs to the TOM1 family. Specifically expressed in siliques and flowers.

The protein localises to the membrane. In terms of biological role, might contribute to the loading of the ESCRT machinery. The polypeptide is TOM1-like protein 8 (Arabidopsis thaliana (Mouse-ear cress)).